A 236-amino-acid polypeptide reads, in one-letter code: 1-(5-phosphoribosyl)-5-[(5-phosphoribosylamino)methylideneamino] imidazole-4-carboxamide isomerase (236 aa).

The active-site Proton acceptor is the aspartate 8. Aspartate 129 (proton donor) is an active-site residue.

Belongs to the HisA/HisF family.

The protein resides in the cytoplasm. It carries out the reaction 1-(5-phospho-beta-D-ribosyl)-5-[(5-phospho-beta-D-ribosylamino)methylideneamino]imidazole-4-carboxamide = 5-[(5-phospho-1-deoxy-D-ribulos-1-ylimino)methylamino]-1-(5-phospho-beta-D-ribosyl)imidazole-4-carboxamide. It participates in amino-acid biosynthesis; L-histidine biosynthesis; L-histidine from 5-phospho-alpha-D-ribose 1-diphosphate: step 4/9. This Methanospirillum hungatei JF-1 (strain ATCC 27890 / DSM 864 / NBRC 100397 / JF-1) protein is 1-(5-phosphoribosyl)-5-[(5-phosphoribosylamino)methylideneamino] imidazole-4-carboxamide isomerase.